The chain runs to 92 residues: Small ribosomal subunit protein bS21A (92 aa).

The segment covering 25–52 has biased composition (basic and acidic residues); the sequence is GVFREMKQRRSYEKPSERKTREKSEAIR. The segment at 25 to 92 is disordered; sequence GVFREMKQRR…LPQTAARPAG (68 aa).

Belongs to the bacterial ribosomal protein bS21 family.

The chain is Small ribosomal subunit protein bS21A from Bradyrhizobium diazoefficiens (strain JCM 10833 / BCRC 13528 / IAM 13628 / NBRC 14792 / USDA 110).